Here is a 599-residue protein sequence, read N- to C-terminus: Sulfite reductase [NADPH] flavoprotein alpha-component (599 aa).

One can recognise a Flavodoxin-like domain in the interval 64–202 (VTLISASQTG…AASEWRACVV (139 aa)). Residues 70 to 75 (SQTGNA), 117 to 120 (STQG), and 153 to 162 (LGDTSYEFFC) each bind FMN. One can recognise an FAD-binding FR-type domain in the interval 234–448 (DAPLTATLSV…IEHNDNFRLP (215 aa)). FAD is bound by residues Thr-322, Ala-356, 386–389 (RLYS), 404–406 (TVG), Tyr-410, and 419–422 (GGAS). Residues 519 to 520 (SR), 525 to 529 (KIYVQ), and Asp-561 contribute to the NADP(+) site. Tyr-599 serves as a coordination point for FAD.

Belongs to the NADPH-dependent sulphite reductase flavoprotein subunit CysJ family. It in the N-terminal section; belongs to the flavodoxin family. The protein in the C-terminal section; belongs to the flavoprotein pyridine nucleotide cytochrome reductase family. As to quaternary structure, alpha(8)-beta(8). The alpha component is a flavoprotein, the beta component is a hemoprotein. The cofactor is FAD. It depends on FMN as a cofactor.

It catalyses the reaction hydrogen sulfide + 3 NADP(+) + 3 H2O = sulfite + 3 NADPH + 4 H(+). The protein operates within sulfur metabolism; hydrogen sulfide biosynthesis; hydrogen sulfide from sulfite (NADPH route): step 1/1. Component of the sulfite reductase complex that catalyzes the 6-electron reduction of sulfite to sulfide. This is one of several activities required for the biosynthesis of L-cysteine from sulfate. The flavoprotein component catalyzes the electron flow from NADPH -&gt; FAD -&gt; FMN to the hemoprotein component. The polypeptide is Sulfite reductase [NADPH] flavoprotein alpha-component (Salmonella typhi).